Consider the following 332-residue polypeptide: Serpentine receptor class gamma-3 (332 aa).

Helical transmembrane passes span 23-43 (FAYL…IWVS), 72-92 (LIFT…SEIV), 101-121 (IYYC…IFIA), 144-164 (IMLI…LISD), 184-204 (WASL…ITMV), 231-251 (AALI…FAFF), and 263-283 (YLRF…LLLV).

This sequence belongs to the nematode receptor-like protein srg family.

The protein localises to the membrane. The chain is Serpentine receptor class gamma-3 (srg-3) from Caenorhabditis elegans.